The following is a 425-amino-acid chain: 2,3-diketo-L-gulonate TRAP transporter large permease protein YiaN (425 aa).

The next 11 membrane-spanning stretches (helical) occupy residues 3-23 (VLIF…IAWA), 54-74 (FSLL…AGGL), 93-113 (LGYV…SAVA), 139-159 (LIAS…FIIF), 170-190 (LFMA…LTWW), 209-229 (IWHS…IIGG), 235-255 (FTPT…ATVI), 277-297 (VVMF…IAEL), 314-334 (LLFI…DLTP), 355-375 (IYFG…PPIG), and 399-419 (YVLV…LIIL).

The protein belongs to the TRAP transporter large permease family. In terms of assembly, the complex comprises the extracytoplasmic solute receptor protein YiaO, and the two transmembrane proteins YiaM and YiaN.

The protein localises to the cell inner membrane. In terms of biological role, part of the tripartite ATP-independent periplasmic (TRAP) transport system YiaMNO involved in the uptake of 2,3-diketo-L-gulonate. This chain is 2,3-diketo-L-gulonate TRAP transporter large permease protein YiaN (yiaN), found in Escherichia coli (strain K12).